The sequence spans 279 residues: Undecaprenyl-diphosphatase (279 aa).

A run of 8 helical transmembrane segments spans residues 2–22 (LIIE…TEWL), 44–64 (AFIE…VMLI), 85–105 (WQLW…AVPL), 113–133 (FYFM…FIWI), 163–183 (VLSI…AIIL), 188–208 (TVAA…YSGL), 223–243 (AQVL…LLAI), and 255–275 (FTIF…YSFF).

It belongs to the UppP family.

Its subcellular location is the cell membrane. It carries out the reaction di-trans,octa-cis-undecaprenyl diphosphate + H2O = di-trans,octa-cis-undecaprenyl phosphate + phosphate + H(+). Functionally, catalyzes the dephosphorylation of undecaprenyl diphosphate (UPP). Confers resistance to bacitracin. The sequence is that of Undecaprenyl-diphosphatase from Streptococcus pyogenes serotype M5 (strain Manfredo).